Reading from the N-terminus, the 317-residue chain is Protoheme IX farnesyltransferase (317 aa).

Transmembrane regions (helical) follow at residues 39 to 59 (VLYLVVYTGAAGLLVAPGGIN), 60 to 80 (PILGFTAILCIAMAAGAAGAI), 109 to 129 (GALAYGVALSALSVLLMWLAT), 131 to 151 (LLAAGLLAASIGFYVFIYTMW), 160 to 180 (IVIGGAAGAFPPVIGWAAATG), 184 to 204 (LLPVLLFAIIFFWTPPHFWAL), 249 to 269 (VLHLAGPVYGASAMVLGLAFV), and 297 to 317 (FKFSILYLFLIFGALVLDHLV).

The protein belongs to the UbiA prenyltransferase family. Protoheme IX farnesyltransferase subfamily.

Its subcellular location is the cell inner membrane. The catalysed reaction is heme b + (2E,6E)-farnesyl diphosphate + H2O = Fe(II)-heme o + diphosphate. It participates in porphyrin-containing compound metabolism; heme O biosynthesis; heme O from protoheme: step 1/1. Converts heme B (protoheme IX) to heme O by substitution of the vinyl group on carbon 2 of heme B porphyrin ring with a hydroxyethyl farnesyl side group. The polypeptide is Protoheme IX farnesyltransferase (Acidiphilium cryptum (strain JF-5)).